The primary structure comprises 359 residues: Isopentenyl-diphosphate delta-isomerase (359 aa).

12–13 (RK) contacts substrate. FMN-binding positions include S68, 69–71 (AMT), S99, and N128. Substrate is bound at residue 99–101 (SQR). Q162 serves as a coordination point for substrate. Residue E163 participates in Mg(2+) binding. FMN is bound by residues K194, T224, 277–279 (GIR), and 298–299 (AL).

The protein belongs to the IPP isomerase type 2 family. As to quaternary structure, homooctamer. Dimer of tetramers. FMN serves as cofactor. It depends on NADPH as a cofactor. Mg(2+) is required as a cofactor.

The protein localises to the cytoplasm. The catalysed reaction is isopentenyl diphosphate = dimethylallyl diphosphate. Its function is as follows. Involved in the biosynthesis of isoprenoids. Catalyzes the 1,3-allylic rearrangement of the homoallylic substrate isopentenyl (IPP) to its allylic isomer, dimethylallyl diphosphate (DMAPP). The sequence is that of Isopentenyl-diphosphate delta-isomerase from Methanoregula boonei (strain DSM 21154 / JCM 14090 / 6A8).